Here is a 194-residue protein sequence, read N- to C-terminus: ATP-dependent Clp protease proteolytic subunit 1 (194 aa).

Serine 99 (nucleophile) is an active-site residue. The active site involves histidine 124.

This sequence belongs to the peptidase S14 family. Fourteen ClpP subunits assemble into 2 heptameric rings which stack back to back to give a disk-like structure with a central cavity, resembling the structure of eukaryotic proteasomes.

It localises to the cytoplasm. The enzyme catalyses Hydrolysis of proteins to small peptides in the presence of ATP and magnesium. alpha-casein is the usual test substrate. In the absence of ATP, only oligopeptides shorter than five residues are hydrolyzed (such as succinyl-Leu-Tyr-|-NHMec, and Leu-Tyr-Leu-|-Tyr-Trp, in which cleavage of the -Tyr-|-Leu- and -Tyr-|-Trp bonds also occurs).. Its function is as follows. Cleaves peptides in various proteins in a process that requires ATP hydrolysis. Has a chymotrypsin-like activity. Plays a major role in the degradation of misfolded proteins. This chain is ATP-dependent Clp protease proteolytic subunit 1, found in Borreliella burgdorferi (strain ATCC 35210 / DSM 4680 / CIP 102532 / B31) (Borrelia burgdorferi).